We begin with the raw amino-acid sequence, 805 residues long: Mediator of RNA polymerase II transcription subunit 25 (805 aa).

Disordered regions lie at residues 308–332 (NQMP…PQNT) and 647–691 (QQPQ…NPQL). The span at 647 to 678 (QQPQQAASQAPPQATQTTVQAPGQPQNPQPGA) shows a compositional bias: low complexity. An LXXLL motif motif is present at residues 691–695 (LRNLL).

The protein belongs to the Mediator complex subunit 25 family. In terms of assembly, component of the Mediator complex.

Its subcellular location is the nucleus. Its function is as follows. Component of the Mediator complex, a coactivator involved in the regulated transcription of nearly all RNA polymerase II-dependent genes. Mediator functions as a bridge to convey information from gene-specific regulatory proteins to the basal RNA polymerase II transcription machinery. Mediator is recruited to promoters by direct interactions with regulatory proteins and serves as a scaffold for the assembly of a functional preinitiation complex with RNA polymerase II and the general transcription factors. The sequence is that of Mediator of RNA polymerase II transcription subunit 25 (med25) from Xenopus tropicalis (Western clawed frog).